The chain runs to 431 residues: Tryptophan synthase beta chain (431 aa).

Lys-109 carries the N6-(pyridoxal phosphate)lysine modification.

Belongs to the TrpB family. In terms of assembly, tetramer of two alpha and two beta chains. Pyridoxal 5'-phosphate serves as cofactor.

It carries out the reaction (1S,2R)-1-C-(indol-3-yl)glycerol 3-phosphate + L-serine = D-glyceraldehyde 3-phosphate + L-tryptophan + H2O. It participates in amino-acid biosynthesis; L-tryptophan biosynthesis; L-tryptophan from chorismate: step 5/5. Its function is as follows. The beta subunit is responsible for the synthesis of L-tryptophan from indole and L-serine. The protein is Tryptophan synthase beta chain of Deinococcus radiodurans (strain ATCC 13939 / DSM 20539 / JCM 16871 / CCUG 27074 / LMG 4051 / NBRC 15346 / NCIMB 9279 / VKM B-1422 / R1).